The primary structure comprises 629 residues: Endoglucanase 15 (629 aa).

Residues 1–30 form the signal peptide; the sequence is MAKNGGAHGAATLFGLLALASMVKLGFVAG. The active-site Nucleophile is aspartate 87. Active-site residues include histidine 421, aspartate 473, and glutamate 482. 3 N-linked (GlcNAc...) asparagine glycosylation sites follow: asparagine 520, asparagine 540, and asparagine 561.

It belongs to the glycosyl hydrolase 9 (cellulase E) family.

It localises to the secreted. The catalysed reaction is Endohydrolysis of (1-&gt;4)-beta-D-glucosidic linkages in cellulose, lichenin and cereal beta-D-glucans.. This Oryza sativa subsp. japonica (Rice) protein is Endoglucanase 15.